Here is a 445-residue protein sequence, read N- to C-terminus: Proline--tRNA ligase (445 aa).

It belongs to the class-II aminoacyl-tRNA synthetase family. ProS type 2 subfamily. In terms of assembly, homodimer.

The protein localises to the cytoplasm. It catalyses the reaction tRNA(Pro) + L-proline + ATP = L-prolyl-tRNA(Pro) + AMP + diphosphate. Its function is as follows. Catalyzes the attachment of proline to tRNA(Pro) in a two-step reaction: proline is first activated by ATP to form Pro-AMP and then transferred to the acceptor end of tRNA(Pro). The sequence is that of Proline--tRNA ligase from Caulobacter sp. (strain K31).